The primary structure comprises 103 residues: Histone H4 (103 aa).

Gly residues predominate over residues 1–14 (MSGRGKGGKGLGKG). A disordered region spans residues 1-20 (MSGRGKGGKGLGKGGAKRHR). The DNA-binding element occupies 17 to 21 (KRHRK).

The protein belongs to the histone H4 family. In terms of assembly, the nucleosome is a histone octamer containing two molecules each of H2A, H2B, H3 and H4 assembled in one H3-H4 heterotetramer and two H2A-H2B heterodimers. The octamer wraps approximately 147 bp of DNA.

Its subcellular location is the nucleus. It localises to the chromosome. In terms of biological role, core component of nucleosome. Nucleosomes wrap and compact DNA into chromatin, limiting DNA accessibility to the cellular machineries which require DNA as a template. Histones thereby play a central role in transcription regulation, DNA repair, DNA replication and chromosomal stability. DNA accessibility is regulated via a complex set of post-translational modifications of histones, also called histone code, and nucleosome remodeling. This chain is Histone H4, found in Eimeria tenella (Coccidian parasite).